The sequence spans 122 residues: Large ribosomal subunit protein uL14c (122 aa).

Belongs to the universal ribosomal protein uL14 family. As to quaternary structure, part of the 50S ribosomal subunit.

Its subcellular location is the plastid. It localises to the chloroplast. Binds to 23S rRNA. This is Large ribosomal subunit protein uL14c from Gracilaria tenuistipitata var. liui (Red alga).